We begin with the raw amino-acid sequence, 53 residues long: UPF0391 membrane protein azo1750 (53 aa).

2 helical membrane-spanning segments follow: residues 6–26 (VIFL…IAAG) and 30–50 (IAKI…VLGM).

The protein belongs to the UPF0391 family.

The protein localises to the cell membrane. The sequence is that of UPF0391 membrane protein azo1750 from Azoarcus sp. (strain BH72).